A 415-amino-acid polypeptide reads, in one-letter code: Fructose-like permease IIC component (415 aa).

Residues 1–46 (MAIKKRSATVVPGASGAAAAVKNLQASKSSFWGELPQHVMSGISRM) lie on the Cytoplasmic side of the membrane. The PTS EIIC type-2 domain occupies 35–415 (LPQHVMSGIS…RKGKLLIDSL (381 aa)). The chain crosses the membrane as a helical span at residues 47–67 (VPTLIMGGVILAFSQLIAYSW). The Periplasmic portion of the chain corresponds to 68–101 (LKIPAEIGIMDALNSGKFSGFDLSLLKFAWLSQS). A helical membrane pass occupies residues 102 to 122 (FGGVLFGFAIPMFAAFVANSI). Residues 123–126 (GGKL) lie on the Cytoplasmic side of the membrane. The chain crosses the membrane as a helical span at residues 127 to 147 (AFPAGFIGGLMSTQPTQLLNF). Over 148–157 (DPSTMQWATS) the chain is Periplasmic. The helical transmembrane segment at 158 to 178 (SPVPSTFIGALIISIVAGYLV) threads the bilayer. Residues 179-197 (KWMNQKIQLPDFLLAFKTT) are Cytoplasmic-facing. Residues 198-218 (FLLPILSAIFVMLAMYYVITP) form a helical membrane-spanning segment. Topologically, residues 219 to 237 (FGGWINGGIRTVLTAAGEK) are periplasmic. Residues 238-258 (GALMYAMGIAAATAIDLGGPI) form a helical membrane-spanning segment. Residues 259-276 (NKAAGFVAFSFTTDHVLP) are Cytoplasmic-facing. The helical transmembrane segment at 277 to 297 (VTARSIAIVIPPIGLGLATII) threads the bilayer. At 298–318 (DRRLTGKRLFNAQLYPQGKTA) the chain is on the periplasmic side. The chain crosses the membrane as a helical span at residues 319-339 (MFLAFMGISEGAIPFALESPI). Topologically, residues 340-341 (TA) are cytoplasmic. The chain crosses the membrane as a helical span at residues 342 to 362 (IPSYMVGAIVGSTAAVWLGAV). Over 363–378 (QWFPESAIWAWPLVTN) the chain is Periplasmic. The helical transmembrane segment at 379–399 (LGVYMAGIALGAIITALMVVF) threads the bilayer. Over 400–415 (LRLMMFRKGKLLIDSL) the chain is Cytoplasmic.

The protein localises to the cell inner membrane. Its function is as follows. The phosphoenolpyruvate-dependent sugar phosphotransferase system (PTS), a major carbohydrate active -transport system, catalyzes the phosphorylation of incoming sugar substrates concomitant with their translocation across the cell membrane. In Shigella flexneri, this protein is Fructose-like permease IIC component (fryC).